The primary structure comprises 414 residues: Succinylornithine transaminase (414 aa).

At Lys-260 the chain carries N6-(pyridoxal phosphate)lysine.

It belongs to the class-III pyridoxal-phosphate-dependent aminotransferase family. AstC subfamily. Pyridoxal 5'-phosphate is required as a cofactor.

The enzyme catalyses N(2)-succinyl-L-ornithine + 2-oxoglutarate = N-succinyl-L-glutamate 5-semialdehyde + L-glutamate. It participates in amino-acid degradation; L-arginine degradation via AST pathway; L-glutamate and succinate from L-arginine: step 3/5. Catalyzes the transamination of N(2)-succinylornithine and alpha-ketoglutarate into N(2)-succinylglutamate semialdehyde and glutamate. Can also act as an acetylornithine aminotransferase. The sequence is that of Succinylornithine transaminase from Yersinia pestis bv. Antiqua (strain Antiqua).